A 460-amino-acid polypeptide reads, in one-letter code: Protein king tubby (460 aa).

Disordered regions lie at residues Asn-75–Arg-97 and His-115–Val-208. A compositionally biased stretch (polar residues) spans Ala-85–Arg-97. A compositionally biased stretch (low complexity) spans Gln-130–Gln-145. At Ser-153 the chain carries Phosphoserine. Positions Asn-194–Glu-203 are enriched in gly residues.

Belongs to the TUB family. In terms of tissue distribution, detected in sensory neurons which have a ciliary structure such as the chordotonal neurons, Orco-expressing olfactory receptor neurons, labellar gustatory receptor neurons and in the femoral chordotonal organ (at protein level). In the chordotonal neurons of the Johnston's organ expressed in the proximal to distal cilia, with lower levels of expression in the distal portion (at protein level). Also detected in the salivary glands and antenna (at protein level). Expressed in photoreceptor cells (at protein level). At stage 9 expression is detected in a subset of neuroblasts. By stage 12 expression is found in both the CNS and PNS. In late-stage embryos, expression persists in the CNS and PNS with more abundant expression in the antennal-maxillary sensory neurons and in bilateral groups of cells in the brain.

It is found in the cytoplasm. It localises to the nucleus. The protein resides in the cell projection. Its subcellular location is the cilium membrane. The protein localises to the rhabdomere. Functions in regulating protein trafficking, retinal maintenance and lipid storage. Protects photoreceptor cells R1 to R6 against light-induced retinal degeneration by stimulating norpA-mediated endocytosis of the rhodopsin ninaE (Rh1). In the auditory receptor neurons, functions as a cilia trafficking regulator of various transient receptor potential (TRP) channel components including iav and nompC. Likely to deliver pre-ciliary vesicles containing membrane proteins such as iav and nompC to the intraflagellar transport complex (IFT) at the cilia base. Plays a role in the inhibition of fat storage. In Drosophila melanogaster (Fruit fly), this protein is Protein king tubby (ktub).